The primary structure comprises 1027 residues: MGVGDGRDQYELAAMSEQSGKKKSKNKKEKKEKDMDELKKEVDLDDHKLSLEELHHKYGTDLSKGLSNSRAEEILARDGPNALTPPPTTPEWVKFCKQMFGGFSMLLWTGAVLCFLAYGILAAMEDEPANDNLYLGVVLSAVVIITGCFSYYQDAKSSKIMDSFKNLVPQQALVVRDGEKKQINAEEVVIGDLVEVKGGDRIPADLRIISSHGCKVDNSSLTGESEPQTRSPDFSNDNPLETKNIAFFSTNCVEGTARGIVISTGDRTVMGRIATLASGLEVGRTPISIEIEHFIHIITGVAVFLGVSFLLLSLVLGYSWLEAVIFLIGIIVANVPEGLLATVTVCLTLTAKRMAKKNCLVKNLEAVETLGSTSTICSDKTGTLTQNRMTVAHMWFDNQIHEADTTENQSGTSFDRSSDTWASLARIAGLCNRAVFLAEQIDVPILKRDVAGDASESALLKCIELCCGSVKEMREKFTKVAEIPFNSTNKYQLSVHKIPSGGKESQHLLVMKGAPERILDRCATIMIQGKEQLLDDEIKESFQNAYLELGGLGERVLGFCHFYLPDEQFPEGFQFDADDVNFPTENLCFVGLMSMIDPPRAAVPDAVGKCRSAGIKVIMVTGDHPITAKAIAKGVGIISEGNETVEDIAARLNIPVNEVNPRDAKACVVHGGDLKDLSCEQLDDILKYHTEIVFARTSPQQKLIIVEGCQRTGAIVAVTGDGVNDSPALKKADIGVAMGIAGSDVSKQAADMILLDDNFASIVTGVEEGRLIFDNLKKSIAYTLTSNIPEITPFLFFIIANIPLPLGTVTILCIDLGTDMLPAISLAYEAAESDIMKRQPRNPKTDKLVNERLISIAYGQIGMIQALAGFFTYFVILAENGFLPPRLLGIRMNWDDKYINDLEDSYGQQWTYEQRKIVEFTCHTAFFTSIVIVQWADLIICKTRRNSVFQQGMKNKILIFGLFEETALAAFLSYCPGMDVALRMYPLKPNWWFCAFPYSLLIFIYDEIRKLILRRNPGGWMERETYY.

Positions 1–5 (MGVGD) are excised as a propeptide. Positions 1 to 10 (MGVGDGRDQY) are enriched in basic and acidic residues. The disordered stretch occupies residues 1–39 (MGVGDGRDQYELAAMSEQSGKKKSKNKKEKKEKDMDELK). Over 6-90 (GRDQYELAAM…NALTPPPTTP (85 aa)) the chain is Cytoplasmic. A Phosphoserine; by PKC modification is found at Ser-16. A compositionally biased stretch (basic and acidic residues) spans 29–39 (EKKEKDMDELK). An interaction with phosphoinositide-3 kinase region spans residues 85 to 87 (PPP). The chain crosses the membrane as a helical span at residues 91-111 (EWVKFCKQMFGGFSMLLWTGA). Residues 112 to 134 (VLCFLAYGILAAMEDEPANDNLY) are Extracellular-facing. The chain crosses the membrane as a helical span at residues 135-155 (LGVVLSAVVIITGCFSYYQDA). At 156 to 291 (KSSKIMDSFK…VGRTPISIEI (136 aa)) the chain is on the cytoplasmic side. The interval 217–238 (DNSSLTGESEPQTRSPDFSNDN) is disordered. A helical membrane pass occupies residues 292-311 (EHFIHIITGVAVFLGVSFLL). Topologically, residues 312–323 (LSLVLGYSWLEA) are extracellular. The chain crosses the membrane as a helical span at residues 324-341 (VIFLIGIIVANVPEGLLA). At 342-776 (TVTVCLTLTA…EEGRLIFDNL (435 aa)) the chain is on the cytoplasmic side. Asp-379 functions as the 4-aspartylphosphate intermediate in the catalytic mechanism. Lys-490 lines the ATP pocket. Residues Asp-721 and Asp-725 each contribute to the Mg(2+) site. A helical membrane pass occupies residues 777–796 (KKSIAYTLTSNIPEITPFLF). Residues 797-806 (FIIANIPLPL) lie on the Extracellular side of the membrane. The chain crosses the membrane as a helical span at residues 807–827 (GTVTILCIDLGTDMLPAISLA). Residues 828-847 (YEAAESDIMKRQPRNPKTDK) lie on the Cytoplasmic side of the membrane. The helical transmembrane segment at 848 to 870 (LVNERLISIAYGQIGMIQALAGF) threads the bilayer. The Extracellular portion of the chain corresponds to 871–922 (FTYFVILAENGFLPPRLLGIRMNWDDKYINDLEDSYGQQWTYEQRKIVEFTC). Residues 923–942 (HTAFFTSIVIVQWADLIICK) form a helical membrane-spanning segment. The Cytoplasmic segment spans residues 943 to 955 (TRRNSVFQQGMKN). Position 947 is a phosphoserine; by PKA (Ser-947). A helical transmembrane segment spans residues 956-974 (KILIFGLFEETALAAFLSY). Over 975–989 (CPGMDVALRMYPLKP) the chain is Extracellular. The chain crosses the membrane as a helical span at residues 990–1010 (NWWFCAFPYSLLIFIYDEIRK). Topologically, residues 1011–1027 (LILRRNPGGWMERETYY) are cytoplasmic.

It belongs to the cation transport ATPase (P-type) (TC 3.A.3) family. Type IIC subfamily. The sodium/potassium-transporting ATPase is composed of a catalytic alpha subunit, an auxiliary non-catalytic beta subunit and an additional regulatory subunit.

The protein resides in the cell membrane. The protein localises to the sarcolemma. It carries out the reaction K(+)(out) + Na(+)(in) + ATP + H2O = K(+)(in) + Na(+)(out) + ADP + phosphate + H(+). This is the catalytic component of the active enzyme, which catalyzes the hydrolysis of ATP coupled with the exchange of sodium and potassium ions across the plasma membrane. This action creates the electrochemical gradient of sodium and potassium ions, providing the energy for active transport of various nutrients. The polypeptide is Sodium/potassium-transporting ATPase subunit alpha-1 (atp1a1) (Catostomus commersonii (White sucker)).